We begin with the raw amino-acid sequence, 347 residues long: D-alanine--D-alanine ligase (347 aa).

Positions 131 to 333 constitute an ATP-grasp domain; sequence KRVLESAGIA…YPELIERLVD (203 aa). Position 161–216 (161–216) interacts with ATP; the sequence is EEKLAYPVFTKPSNMGSSVGISKSENQEELRQALELAFRYDSRVLVEQGVNAREIE. Residues Asp-287, Glu-300, and Asn-302 each coordinate Mg(2+).

Belongs to the D-alanine--D-alanine ligase family. The cofactor is Mg(2+). Mn(2+) serves as cofactor.

It localises to the cytoplasm. It catalyses the reaction 2 D-alanine + ATP = D-alanyl-D-alanine + ADP + phosphate + H(+). The protein operates within cell wall biogenesis; peptidoglycan biosynthesis. In terms of biological role, cell wall formation. This is D-alanine--D-alanine ligase from Streptococcus pneumoniae (strain CGSP14).